The following is an 81-amino-acid chain: Salivary thrombin inhibitor anophelin (81 aa).

An N-terminal signal peptide occupies residues 1 to 22; sequence MANKLFLISLLCVVLVAKIAQA. An N-linked (GlcNAc...) asparagine glycan is attached at asparagine 45. A blocks active site cleft of host thrombin in a reverse direction compared to substrates region spans residues 70 to 73; the sequence is DPGR.

The protein belongs to the anophelin family. In terms of assembly, interacts with human F2 (thrombin); the interaction results in thrombin inhibition.

It localises to the secreted. Salivary protein with anticoagulant activity that inhibits host thrombin (F2). The polypeptide is Salivary thrombin inhibitor anophelin (Anopheles darlingi (Mosquito)).